Consider the following 274-residue polypeptide: NH(3)-dependent NAD(+) synthetase (274 aa).

ATP is bound at residue 46–53; that stretch reads GISGGQDS. Residue D52 coordinates Mg(2+). R140 serves as a coordination point for deamido-NAD(+). Residue T160 participates in ATP binding. E165 contributes to the Mg(2+) binding site. Positions 173 and 180 each coordinate deamido-NAD(+). ATP-binding residues include K189 and T211. 260-261 provides a ligand contact to deamido-NAD(+); it reads HK.

The protein belongs to the NAD synthetase family. As to quaternary structure, homodimer.

The catalysed reaction is deamido-NAD(+) + NH4(+) + ATP = AMP + diphosphate + NAD(+) + H(+). It functions in the pathway cofactor biosynthesis; NAD(+) biosynthesis; NAD(+) from deamido-NAD(+) (ammonia route): step 1/1. Functionally, catalyzes the ATP-dependent amidation of deamido-NAD to form NAD. Uses ammonia as a nitrogen source. The polypeptide is NH(3)-dependent NAD(+) synthetase (Listeria welshimeri serovar 6b (strain ATCC 35897 / DSM 20650 / CCUG 15529 / CIP 8149 / NCTC 11857 / SLCC 5334 / V8)).